The sequence spans 52 residues: Alpha-1-antiproteinase 3 (52 aa).

The segment at 1–20 (EDLQGDAVPEEXATKDDNEH) is disordered.

It belongs to the serpin family. In terms of processing, N-glycosylated; contains glycans with bi- and triantennary side chains. In terms of tissue distribution, plasma.

Its subcellular location is the secreted. The sequence is that of Alpha-1-antiproteinase 3 from Equus caballus (Horse).